The following is a 184-amino-acid chain: Ras-related protein Rap-1b (184 aa).

Residue 10-18 (GSGGVGKSA) coordinates GTP. Residues 25–67 (QGIFVEKYDPTIEDSYRKQVEVDAQQCMLEILDTAGTEQFTAM) are interaction with KRIT1. The short motif at 32 to 40 (YDPTIEDSY) is the Effector region element. Residues 57-61 (DTAGT), 116-119 (NKCD), and 147-149 (SAK) contribute to the GTP site. Residue serine 179 is modified to Phosphoserine; by PKA. Cysteine 181 is modified (cysteine methyl ester). The S-geranylgeranyl cysteine moiety is linked to residue cysteine 181. A propeptide spans 182–184 (QLL) (removed in mature form).

In terms of assembly, heterodimer with RAP1GAP. Interacts with EPAC2. Interacts with SGSM1. Interacts with SGSM2. Interacts with SGSM3. Interacts with KRIT1. Interacts with RAP1GDS1.

It localises to the cell membrane. The protein localises to the cytoplasm. The protein resides in the cytosol. Its subcellular location is the cell junction. The enzyme catalyses GTP + H2O = GDP + phosphate + H(+). Its activity is regulated as follows. Activated by guanine nucleotide-exchange factor (GEF) EPAC2 in a cAMP-dependent manner. GTP-binding protein that possesses intrinsic GTPase activity. Contributes to the polarizing activity of KRIT1 and CDH5 in the establishment and maintenance of correct endothelial cell polarity and vascular lumen. Required for the localization of phosphorylated PRKCZ, PARD3 and TIAM1 to the cell junction. Plays a role in the establishment of basal endothelial barrier function. This Bos taurus (Bovine) protein is Ras-related protein Rap-1b (RAP1B).